Here is a 352-residue protein sequence, read N- to C-terminus: MTQISERLLVQAHLDAKQSNPLTPEQEADYRAAIAAELKRQNAVLVAHYYCDPVIQALAEETGGCVSDSLEMARFGKNHSAETVVVAGVRFMGETAKILTPEKRVLMPTLEATCSLDLGCPVEAFSAFCDQHPERTVVVYANTSAAVKARADWVVTSSCALEIVESLMDNGETIIWGPDQHLGRYIQKQTGADMLLWDGACIVHEEFKSRQLADMKALYPDAAILVHPESPEAVIDLADAVGSTSQLIKAAQTLPNKTFIVATDRGIFYKMQQLCPDKEFVEAPTAGNGAACRSCAHCPWMAMNTLERVLDCLRQGSNEIFVEPALIPKAIKPLNRMLDFTQAARLKVSGNA.

Iminosuccinate-binding residues include His48 and Ser69. Cys114 serves as a coordination point for [4Fe-4S] cluster. Iminosuccinate contacts are provided by residues 140–142 (YAN) and Ser157. Cys201 serves as a coordination point for [4Fe-4S] cluster. Residues 227–229 (HPE) and Thr244 contribute to the iminosuccinate site. Position 298 (Cys298) interacts with [4Fe-4S] cluster.

The protein belongs to the quinolinate synthase family. Type 1 subfamily. The cofactor is [4Fe-4S] cluster.

Its subcellular location is the cytoplasm. It catalyses the reaction iminosuccinate + dihydroxyacetone phosphate = quinolinate + phosphate + 2 H2O + H(+). It participates in cofactor biosynthesis; NAD(+) biosynthesis; quinolinate from iminoaspartate: step 1/1. Functionally, catalyzes the condensation of iminoaspartate with dihydroxyacetone phosphate to form quinolinate. The polypeptide is Quinolinate synthase (Pseudomonas entomophila (strain L48)).